Here is a 463-residue protein sequence, read N- to C-terminus: Interleukin enhancer-binding factor 2 (463 aa).

At Arg-94 the chain carries Asymmetric dimethylarginine; alternate. Arg-94 carries the post-translational modification Omega-N-methylarginine; alternate. The region spanning 108–444 (RHILAYDWLA…PEKKEGEEEE (337 aa)) is the DZF domain. Arg-145 carries the post-translational modification Omega-N-methylarginine. Residue Lys-166 forms a Glycyl lysine isopeptide (Lys-Gly) (interchain with G-Cter in ubiquitin) linkage. Phosphoserine occurs at positions 173 and 189. Glycyl lysine isopeptide (Lys-Gly) (interchain with G-Cter in SUMO2) cross-links involve residues Lys-259 and Lys-437. A disordered region spans residues 424–463 (VTPSEKAYEKPPEKKEGEEEEENTEEPPQGEEEESMETQE). Residues 429 to 440 (KAYEKPPEKKEG) are compositionally biased toward basic and acidic residues. A compositionally biased stretch (acidic residues) spans 441 to 463 (EEEEENTEEPPQGEEEESMETQE). The residue at position 461 (Thr-461) is a Phosphothreonine.

As to quaternary structure, forms heterodimers with ILF3. ILF2-ILF3 heterodimers may also bind to PRKDC/XRCC7: this may stabilize the interaction of PRKDC/XRCC7 and the heterodimeric complex of G22P1/KU70 and XRCC5/KU80. Forms a complex with ILF3, YLPM1, KHDRBS1, RBMX, NCOA5 and PPP1CA. Identified in a IGF2BP1-dependent mRNP granule complex containing untranslated mRNAs. Interacts with IGF2BP1. Interacts with CRBN; this interaction promotes ubiquitination and subsequent degradation of ILF2. Ubiquitinated at Lys-166 by CRBN with polyubiquitin chains by the CUL4-RING E3 ligase (CRL4-CRBN) and then degraded by the proteasome.

It localises to the nucleus. The protein localises to the nucleolus. It is found in the cytoplasm. Its function is as follows. Chromatin-interacting protein that forms a stable heterodimer with interleukin enhancer-binding factor 3/ILF3 and plays a role in several biological processes including transcription, innate immunity or cell growth. Essential for the efficient reshuttling of ILF3 (isoform 1 and isoform 2) into the nucleus. Together with ILF3, forms an RNA-binding complex that is required for mitotic progression and cytokinesis by regulating the expression of a cluster of mitotic genes. Mechanistically, competes with STAU1/STAU2-mediated mRNA decay. Plays also a role in the inhibition of various viruses including Japanese encephalitis virus or enterovirus 71. In Rattus norvegicus (Rat), this protein is Interleukin enhancer-binding factor 2 (Ilf2).